We begin with the raw amino-acid sequence, 282 residues long: 4-diphosphocytidyl-2-C-methyl-D-erythritol kinase (282 aa).

Residue Lys11 is part of the active site. 93–103 (LVSAGLAGGSA) contacts ATP. Residue Asp133 is part of the active site.

This sequence belongs to the GHMP kinase family. IspE subfamily.

The catalysed reaction is 4-CDP-2-C-methyl-D-erythritol + ATP = 4-CDP-2-C-methyl-D-erythritol 2-phosphate + ADP + H(+). It functions in the pathway isoprenoid biosynthesis; isopentenyl diphosphate biosynthesis via DXP pathway; isopentenyl diphosphate from 1-deoxy-D-xylulose 5-phosphate: step 3/6. In terms of biological role, catalyzes the phosphorylation of the position 2 hydroxy group of 4-diphosphocytidyl-2C-methyl-D-erythritol. This is 4-diphosphocytidyl-2-C-methyl-D-erythritol kinase from Ehrlichia canis (strain Jake).